We begin with the raw amino-acid sequence, 337 residues long: Anthranilate phosphoribosyltransferase (337 aa).

5-phospho-alpha-D-ribose 1-diphosphate-binding positions include Gly82, 85-86, Thr90, 92-95, 110-118, and Ser122; these read GD, NIST, and KHGGRSVSS. Gly82 lines the anthranilate pocket. Ser94 contributes to the Mg(2+) binding site. Residue Arg168 coordinates anthranilate. 2 residues coordinate Mg(2+): Asp226 and Glu227.

This sequence belongs to the anthranilate phosphoribosyltransferase family. As to quaternary structure, homodimer. Requires Mg(2+) as cofactor.

The catalysed reaction is N-(5-phospho-beta-D-ribosyl)anthranilate + diphosphate = 5-phospho-alpha-D-ribose 1-diphosphate + anthranilate. Its pathway is amino-acid biosynthesis; L-tryptophan biosynthesis; L-tryptophan from chorismate: step 2/5. Functionally, catalyzes the transfer of the phosphoribosyl group of 5-phosphorylribose-1-pyrophosphate (PRPP) to anthranilate to yield N-(5'-phosphoribosyl)-anthranilate (PRA). The polypeptide is Anthranilate phosphoribosyltransferase (Francisella tularensis subsp. holarctica (strain OSU18)).